The following is a 364-amino-acid chain: Aminomethyltransferase (364 aa).

The protein belongs to the GcvT family. In terms of assembly, the glycine cleavage system is composed of four proteins: P, T, L and H.

The catalysed reaction is N(6)-[(R)-S(8)-aminomethyldihydrolipoyl]-L-lysyl-[protein] + (6S)-5,6,7,8-tetrahydrofolate = N(6)-[(R)-dihydrolipoyl]-L-lysyl-[protein] + (6R)-5,10-methylene-5,6,7,8-tetrahydrofolate + NH4(+). Functionally, the glycine cleavage system catalyzes the degradation of glycine. This chain is Aminomethyltransferase, found in Proteus mirabilis (strain HI4320).